Reading from the N-terminus, the 166-residue chain is Ribosome maturation factor RimM (166 aa).

The region spanning 90 to 165 is the PRC barrel domain; the sequence is NDNDAFSIFY…IITLKNIEGL (76 aa).

Belongs to the RimM family. In terms of assembly, binds ribosomal protein uS19.

It is found in the cytoplasm. Functionally, an accessory protein needed during the final step in the assembly of 30S ribosomal subunit, possibly for assembly of the head region. Essential for efficient processing of 16S rRNA. May be needed both before and after RbfA during the maturation of 16S rRNA. It has affinity for free ribosomal 30S subunits but not for 70S ribosomes. In Mesoplasma florum (strain ATCC 33453 / NBRC 100688 / NCTC 11704 / L1) (Acholeplasma florum), this protein is Ribosome maturation factor RimM.